Reading from the N-terminus, the 400-residue chain is Phosphoglycerate kinase (400 aa).

Substrate contacts are provided by residues 21–23, arginine 36, 59–62, arginine 119, and arginine 160; these read DFN and HLGR. ATP contacts are provided by residues lysine 211, glutamate 329, and 356-359; that span reads GGDS.

This sequence belongs to the phosphoglycerate kinase family. As to quaternary structure, monomer.

It is found in the cytoplasm. The enzyme catalyses (2R)-3-phosphoglycerate + ATP = (2R)-3-phospho-glyceroyl phosphate + ADP. It participates in carbohydrate degradation; glycolysis; pyruvate from D-glyceraldehyde 3-phosphate: step 2/5. The chain is Phosphoglycerate kinase from Levilactobacillus brevis (strain ATCC 367 / BCRC 12310 / CIP 105137 / JCM 1170 / LMG 11437 / NCIMB 947 / NCTC 947) (Lactobacillus brevis).